Reading from the N-terminus, the 374-residue chain is Alanine racemase (374 aa).

The active-site Proton acceptor; specific for D-alanine is the Lys-35. Lys-35 bears the N6-(pyridoxal phosphate)lysine mark. Arg-133 serves as a coordination point for substrate. Tyr-264 acts as the Proton acceptor; specific for L-alanine in catalysis. Met-312 serves as a coordination point for substrate.

Belongs to the alanine racemase family. Pyridoxal 5'-phosphate serves as cofactor.

It catalyses the reaction L-alanine = D-alanine. The protein operates within amino-acid biosynthesis; D-alanine biosynthesis; D-alanine from L-alanine: step 1/1. Its function is as follows. Catalyzes the interconversion of L-alanine and D-alanine. May also act on other amino acids. The polypeptide is Alanine racemase (alr) (Thermobifida fusca (strain YX)).